Here is a 495-residue protein sequence, read N- to C-terminus: Acyltransferase abl6 (495 aa).

The active-site Proton acceptor is H171.

This sequence belongs to the plant acyltransferase family.

Its function is as follows. Acyltransferase; part of the gene cluster that mediates the biosynthesis of abscisic acid (ABA), a phytohormone that acts antagonistically toward salicylic acid (SA), jasmonic acid (JA) and ethylene (ETH) signaling, to impede plant defense responses. The first step of the pathway catalyzes the reaction from farnesyl diphosphate to alpha-ionylideneethane performed by the alpha-ionylideneethane synthase abl3 via a three-step reaction mechanism involving 2 neutral intermediates, beta-farnesene and allofarnesene. The cytochrome P450 monooxygenase abl1 might then be involved in the conversion of alpha-ionylideneethane to alpha-ionylideneacetic acid. Alpha-ionylideneacetic acid is further converted to abscisic acid in 2 steps involving the cytochrome P450 monooxygenase abl2 and the short-chain dehydrogenase/reductase abl4, via the intermediates 1'-deoxy-ABA or 1',4'-trans-diol-ABA, depending on the order of action of these 2 enzymes. Abl2 is responsible for the hydroxylation of carbon atom C-1' and abl4 might be involved in the oxidation of the C-4' carbon atom. The acyltransferase abl6 seems not essential for the biosynthesis of ABA, but it may acetylate ABA as part of the synthesis of another ABA-related molecule. This is Acyltransferase abl6 from Leptosphaeria maculans (strain JN3 / isolate v23.1.3 / race Av1-4-5-6-7-8) (Blackleg fungus).